Reading from the N-terminus, the 101-residue chain is Small ribosomal subunit protein uS14 (101 aa).

The protein belongs to the universal ribosomal protein uS14 family. In terms of assembly, part of the 30S ribosomal subunit. Contacts proteins S3 and S10.

Its function is as follows. Binds 16S rRNA, required for the assembly of 30S particles and may also be responsible for determining the conformation of the 16S rRNA at the A site. This Ruegeria sp. (strain TM1040) (Silicibacter sp.) protein is Small ribosomal subunit protein uS14.